The following is a 310-amino-acid chain: Nucleotide-binding protein MAP_1147 (310 aa).

30 to 37 lines the ATP pocket; sequence GLSGAGRG. 81–84 provides a ligand contact to GTP; the sequence is DVRS.

This sequence belongs to the RapZ-like family.

Its function is as follows. Displays ATPase and GTPase activities. The sequence is that of Nucleotide-binding protein MAP_1147 from Mycolicibacterium paratuberculosis (strain ATCC BAA-968 / K-10) (Mycobacterium paratuberculosis).